We begin with the raw amino-acid sequence, 143 residues long: Large ribosomal subunit protein uL11 (143 aa).

It belongs to the universal ribosomal protein uL11 family. As to quaternary structure, part of the ribosomal stalk of the 50S ribosomal subunit. Interacts with L10 and the large rRNA to form the base of the stalk. L10 forms an elongated spine to which L12 dimers bind in a sequential fashion forming a multimeric L10(L12)X complex. In terms of processing, one or more lysine residues are methylated.

Its function is as follows. Forms part of the ribosomal stalk which helps the ribosome interact with GTP-bound translation factors. This chain is Large ribosomal subunit protein uL11, found in Stutzerimonas stutzeri (strain A1501) (Pseudomonas stutzeri).